Consider the following 323-residue polypeptide: Phosphomevalonate kinase (323 aa).

Belongs to the GHMP kinase family. As to quaternary structure, homodimer. It depends on Mg(2+) as a cofactor.

The catalysed reaction is (R)-5-phosphomevalonate + ATP = (R)-5-diphosphomevalonate + ADP. It functions in the pathway isoprenoid biosynthesis; isopentenyl diphosphate biosynthesis via mevalonate pathway; isopentenyl diphosphate from (R)-mevalonate: step 2/3. Catalyzes the phosphorylation of (R)-mevalonate 5-phosphate (MVAP) to (R)-mevalonate 5-diphosphate (MVAPP). Functions in the mevalonate (MVA) pathway leading to isopentenyl diphosphate (IPP), a key precursor for the biosynthesis of isoprenoid compounds such as archaeal membrane lipids. The protein is Phosphomevalonate kinase of Saccharolobus solfataricus (strain ATCC 35092 / DSM 1617 / JCM 11322 / P2) (Sulfolobus solfataricus).